A 486-amino-acid chain; its full sequence is Zinc finger CCCH domain-containing protein 49 (486 aa).

Residues 157–184 (RNRAHVCSFYVRGECTRGAECPYRHEMP) form a C3H1-type zinc finger. The RRM domain occupies 228 to 301 (RTLYIGGLDS…VRLKLMWGKP (74 aa)). Disordered regions lie at residues 329–348 (SQQQSGDQPQPPGMEGQQQP) and 379–486 (LVES…NGMT). Composition is skewed to low complexity over residues 389–407 (PGPQQAGQGQASSSSGQSY) and 415–430 (YHGGQYPPYYPPYGGY). The span at 431–444 (MPPPRMPYQQPPQY) shows a compositional bias: pro residues. Over residues 445–486 (PAYQPMLAPPAQSQASSLQQPAPATQQLGQGPQQQTTQNGMT) the composition is skewed to low complexity.

The polypeptide is Zinc finger CCCH domain-containing protein 49 (Oryza sativa subsp. japonica (Rice)).